Reading from the N-terminus, the 264-residue chain is MKKITINDLMTWKHEGRKFASITAYDASFAQLFEQQEVPVLLVGDSLGMVLQGKPDTLPVSVSDIAYHTRCVRAGSPNTLLMADMPFMSYSTPEQACESAAELMRAGANMVKLEGGAWLAETITKLTERAVPVCAHLGLTPQSVNIFGGYKVQGRDSDHAAQMVKDAILLKNAGAQIILLECVPASLAERITKAVEVPVIGIGAGNVTDGQILVMHDMFGISANYMPRFSKNYLAETGDMRTAVSKYLEEVEAGTFPGPQHTFE.

The Mg(2+) site is built by Asp-45 and Asp-84. 3-methyl-2-oxobutanoate is bound by residues Asp-45–Ser-46, Asp-84, and Lys-112. Glu-114 contributes to the Mg(2+) binding site. The active-site Proton acceptor is Glu-181.

This sequence belongs to the PanB family. In terms of assembly, homodecamer; pentamer of dimers. It depends on Mg(2+) as a cofactor.

The protein localises to the cytoplasm. It catalyses the reaction 3-methyl-2-oxobutanoate + (6R)-5,10-methylene-5,6,7,8-tetrahydrofolate + H2O = 2-dehydropantoate + (6S)-5,6,7,8-tetrahydrofolate. Its pathway is cofactor biosynthesis; (R)-pantothenate biosynthesis; (R)-pantoate from 3-methyl-2-oxobutanoate: step 1/2. In terms of biological role, catalyzes the reversible reaction in which hydroxymethyl group from 5,10-methylenetetrahydrofolate is transferred onto alpha-ketoisovalerate to form ketopantoate. The protein is 3-methyl-2-oxobutanoate hydroxymethyltransferase of Photobacterium profundum (strain SS9).